The primary structure comprises 306 residues: tRNA dimethylallyltransferase (306 aa).

Position 11–18 (11–18) interacts with ATP; the sequence is GPTAVGKS. 13–18 serves as a coordination point for substrate; sequence TAVGKS. Residues 35-38 are interaction with substrate tRNA; sequence DSIQ.

Belongs to the IPP transferase family. As to quaternary structure, monomer. Mg(2+) serves as cofactor.

The enzyme catalyses adenosine(37) in tRNA + dimethylallyl diphosphate = N(6)-dimethylallyladenosine(37) in tRNA + diphosphate. In terms of biological role, catalyzes the transfer of a dimethylallyl group onto the adenine at position 37 in tRNAs that read codons beginning with uridine, leading to the formation of N6-(dimethylallyl)adenosine (i(6)A). This Borreliella burgdorferi (strain ZS7) (Borrelia burgdorferi) protein is tRNA dimethylallyltransferase.